The chain runs to 834 residues: Copper-exporting P-type ATPase (834 aa).

HMA domains lie at 3-64 (QTID…YDAS) and 99-162 (DSQQ…YGAE). Residues Cys14, Cys17, Cys110, and Cys113 each contribute to the Cu(+) site. 6 helical membrane passes run 187–207 (WQAI…MIGD), 218–238 (LWLV…GHFY), 254–274 (TLVA…NLWP), 284–304 (LYYE…MLEA), 438–458 (AVFV…WYFF), and 464–484 (IVYT…CALG). Asp523 (4-aspartylphosphate intermediate) is an active-site residue. Residues Asp720 and Asp724 each coordinate Mg(2+). 2 helical membrane passes run 779 to 799 (LGAF…LWPF) and 801 to 821 (GTLL…ITVV).

Belongs to the cation transport ATPase (P-type) (TC 3.A.3) family. Type IB subfamily.

Its subcellular location is the cell inner membrane. The protein localises to the cytoplasm. It carries out the reaction Cu(+)(in) + ATP + H2O = Cu(+)(out) + ADP + phosphate + H(+). Functionally, involved in Cu(+) export. Probably also encodes a cytoplasmic copper chaperone CopA(Z) that is produced by programmed ribosomal frameshifting. The protein is Copper-exporting P-type ATPase (copA) of Escherichia coli O157:H7.